We begin with the raw amino-acid sequence, 95 residues long: Pyrimidine/purine nucleoside phosphorylase (95 aa).

This sequence belongs to the nucleoside phosphorylase PpnP family.

The enzyme catalyses a purine D-ribonucleoside + phosphate = a purine nucleobase + alpha-D-ribose 1-phosphate. It carries out the reaction adenosine + phosphate = alpha-D-ribose 1-phosphate + adenine. The catalysed reaction is cytidine + phosphate = cytosine + alpha-D-ribose 1-phosphate. It catalyses the reaction guanosine + phosphate = alpha-D-ribose 1-phosphate + guanine. The enzyme catalyses inosine + phosphate = alpha-D-ribose 1-phosphate + hypoxanthine. It carries out the reaction thymidine + phosphate = 2-deoxy-alpha-D-ribose 1-phosphate + thymine. The catalysed reaction is uridine + phosphate = alpha-D-ribose 1-phosphate + uracil. It catalyses the reaction xanthosine + phosphate = alpha-D-ribose 1-phosphate + xanthine. In terms of biological role, catalyzes the phosphorolysis of diverse nucleosides, yielding D-ribose 1-phosphate and the respective free bases. Can use uridine, adenosine, guanosine, cytidine, thymidine, inosine and xanthosine as substrates. Also catalyzes the reverse reactions. In Yersinia pestis bv. Antiqua (strain Antiqua), this protein is Pyrimidine/purine nucleoside phosphorylase.